The sequence spans 769 residues: Dolichyl-phosphate-mannose--protein mannosyltransferase 2 (769 aa).

The tract at residues 1–44 (MSTSVEPNETEALLRKQNDLSTTASIEEKYPHQQGEAAEDDDDT) is disordered. The N-linked (GlcNAc...) asparagine glycan is linked to N8. A helical membrane pass occupies residues 59-79 (SLKQVESILAPIVFTALSFFV). A glycan (N-linked (GlcNAc...) asparagine) is linked at N132. The next 3 helical transmembrane spans lie at 152–169 (MRLF…LAYF), 176–194 (FSMF…ESSY), and 200–218 (FILL…VFCF). N226 carries N-linked (GlcNAc...) asparagine glycosylation. The next 2 helical transmembrane spans lie at 252–272 (VKMV…VDLW) and 288–308 (HWFA…MLSF). N-linked (GlcNAc...) asparagine glycosylation occurs at N324. In terms of domain architecture, MIR 1 spans 342 to 397 (PREVSMFHSVITLKNQGLSGGLLHSHVQTFPEGSKQQQVTTYGHKDSNNNWIFQRA). N-linked (GlcNAc...) asparagine glycans are attached at residues N408, N453, and N462. 2 MIR domains span residues 412 to 468 (IEYI…VEIM) and 474 to 534 (EDKM…IENN). 4 consecutive transmembrane segments (helical) span residues 615 to 635 (TTWT…YYLI), 655 to 675 (FLMG…PFAI), 679 to 699 (VTYV…FCYE), and 718 to 738 (LLYL…FWYF).

The protein belongs to the glycosyltransferase 39 family. As to quaternary structure, PMT1 and PMT2 form a functional heterodimer.

It localises to the endoplasmic reticulum membrane. It carries out the reaction a di-trans,poly-cis-dolichyl beta-D-mannosyl phosphate + L-seryl-[protein] = 3-O-(alpha-D-mannosyl)-L-seryl-[protein] + a di-trans,poly-cis-dolichyl phosphate + H(+). It catalyses the reaction a di-trans,poly-cis-dolichyl beta-D-mannosyl phosphate + L-threonyl-[protein] = 3-O-(alpha-D-mannosyl)-L-threonyl-[protein] + a di-trans,poly-cis-dolichyl phosphate + H(+). It participates in protein modification; protein glycosylation. Its function is as follows. Protein mannosyltransferase (PMT) involved in hyphal growth and drug sensitivity. Transfers mannose from Dol-P-mannose to Ser or Thr residues on proteins. PMT1, PMT2 and PMT4 account for most of the protein-O-glycosylation activity, while PMT5 and PMT6 may specifically modulate a much narrower spectrum of target proteins. Essential protein that plays an important role in virulence. The chain is Dolichyl-phosphate-mannose--protein mannosyltransferase 2 from Candida albicans (strain SC5314 / ATCC MYA-2876) (Yeast).